Consider the following 239-residue polypeptide: Fibroblast growth factor 3 (239 aa).

The N-terminal stretch at 1 to 17 (MGLIWLLLLSLLEPGWP) is a signal peptide. N-linked (GlcNAc...) asparagine glycosylation occurs at N65. The disordered stretch occupies residues 193 to 239 (QLQSGLPRPPGKGVQPRRRRQKQSPDNLEPSHVQASRLGSQLEASAH). Polar residues predominate over residues 225–239 (VQASRLGSQLEASAH).

Belongs to the heparin-binding growth factors family. Interacts with FGFR1 and FGFR2. Affinity between fibroblast growth factors (FGFs) and their receptors is increased by heparan sulfate glycosaminoglycans that function as coreceptors.

It localises to the secreted. In terms of biological role, plays an important role in the regulation of embryonic development, cell proliferation, and cell differentiation. Required for normal ear development. The polypeptide is Fibroblast growth factor 3 (FGF3) (Homo sapiens (Human)).